A 376-amino-acid chain; its full sequence is Glutamate 5-kinase (376 aa).

Residue lysine 16 coordinates ATP. Residues serine 56, aspartate 143, and asparagine 155 each contribute to the substrate site. Residue 175 to 176 participates in ATP binding; sequence TD. Residues 283 to 361 enclose the PUA domain; the sequence is RGALSLDEGA…RDIETTLGYV (79 aa).

The protein belongs to the glutamate 5-kinase family.

The protein localises to the cytoplasm. It carries out the reaction L-glutamate + ATP = L-glutamyl 5-phosphate + ADP. It participates in amino-acid biosynthesis; L-proline biosynthesis; L-glutamate 5-semialdehyde from L-glutamate: step 1/2. In terms of biological role, catalyzes the transfer of a phosphate group to glutamate to form L-glutamate 5-phosphate. The polypeptide is Glutamate 5-kinase (Halorhodospira halophila (strain DSM 244 / SL1) (Ectothiorhodospira halophila (strain DSM 244 / SL1))).